A 428-amino-acid polypeptide reads, in one-letter code: 3-phosphoshikimate 1-carboxyvinyltransferase (428 aa).

3-phosphoshikimate-binding residues include lysine 20, serine 21, and arginine 25. Position 20 (lysine 20) interacts with phosphoenolpyruvate. Phosphoenolpyruvate-binding residues include glycine 92 and arginine 120. Residues serine 166, glutamine 168, aspartate 314, and lysine 341 each coordinate 3-phosphoshikimate. Phosphoenolpyruvate is bound at residue glutamine 168. Aspartate 314 serves as the catalytic Proton acceptor. 2 residues coordinate phosphoenolpyruvate: arginine 345 and arginine 387.

The protein belongs to the EPSP synthase family. In terms of assembly, monomer.

The protein resides in the cytoplasm. It catalyses the reaction 3-phosphoshikimate + phosphoenolpyruvate = 5-O-(1-carboxyvinyl)-3-phosphoshikimate + phosphate. It functions in the pathway metabolic intermediate biosynthesis; chorismate biosynthesis; chorismate from D-erythrose 4-phosphate and phosphoenolpyruvate: step 6/7. Functionally, catalyzes the transfer of the enolpyruvyl moiety of phosphoenolpyruvate (PEP) to the 5-hydroxyl of shikimate-3-phosphate (S3P) to produce enolpyruvyl shikimate-3-phosphate and inorganic phosphate. The polypeptide is 3-phosphoshikimate 1-carboxyvinyltransferase (Listeria monocytogenes serovar 1/2a (strain ATCC BAA-679 / EGD-e)).